A 377-amino-acid polypeptide reads, in one-letter code: MSAVLDLVRDLIARPSVTPQDKDCQQMLAQRLARIGFQCETIARGGVTNLWARRGTQGPLVVFAGHTDVVPPGPREKWDSDPFVPTERDGYLYGRGASDMKSSIAAFVVAVEEFVAAHPQHEGSLAFLLTSDEEGPAIDGTVIVCDALQARGEKLDYCIVGEPTSTHELGDVCKNGRRGSLGGTLTVKGIQGHVAYPHLARNPVHQFAPALAELVGIEWDKGNEYFPPTTFQISNLNSGTGATNVVPAEAIVEFNCRFSTASTPESLKARVHEVLDRHGLEYDLEWDLGGEPFLTARGSLTDALSSAIQAETGLTPELSTTGGTSDGRFIAKICPQVIEFGPTNATIHKINERVALDCLDPLKNIYRRTLENLLLAH.

Residue histidine 66 coordinates Zn(2+). The active site involves aspartate 68. Position 99 (aspartate 99) interacts with Zn(2+). The active-site Proton acceptor is the glutamate 133. The Zn(2+) site is built by glutamate 134, glutamate 162, and histidine 348.

It belongs to the peptidase M20A family. DapE subfamily. As to quaternary structure, homodimer. It depends on Zn(2+) as a cofactor. Requires Co(2+) as cofactor.

The enzyme catalyses N-succinyl-(2S,6S)-2,6-diaminopimelate + H2O = (2S,6S)-2,6-diaminopimelate + succinate. The protein operates within amino-acid biosynthesis; L-lysine biosynthesis via DAP pathway; LL-2,6-diaminopimelate from (S)-tetrahydrodipicolinate (succinylase route): step 3/3. Catalyzes the hydrolysis of N-succinyl-L,L-diaminopimelic acid (SDAP), forming succinate and LL-2,6-diaminopimelate (DAP), an intermediate involved in the bacterial biosynthesis of lysine and meso-diaminopimelic acid, an essential component of bacterial cell walls. The polypeptide is Succinyl-diaminopimelate desuccinylase (Bordetella avium (strain 197N)).